A 154-amino-acid chain; its full sequence is UPF0178 protein ABC1688 (154 aa).

Belongs to the UPF0178 family.

The chain is UPF0178 protein ABC1688 from Shouchella clausii (strain KSM-K16) (Alkalihalobacillus clausii).